The sequence spans 426 residues: Histidine--tRNA ligase (426 aa).

This sequence belongs to the class-II aminoacyl-tRNA synthetase family. As to quaternary structure, homodimer.

Its subcellular location is the cytoplasm. The enzyme catalyses tRNA(His) + L-histidine + ATP = L-histidyl-tRNA(His) + AMP + diphosphate + H(+). This is Histidine--tRNA ligase from Streptococcus agalactiae serotype Ia (strain ATCC 27591 / A909 / CDC SS700).